Reading from the N-terminus, the 445-residue chain is tRNA-2-methylthio-N(6)-dimethylallyladenosine synthase (445 aa).

The region spanning 3 to 124 is the MTTase N-terminal domain; the sequence is KKLYIKTYGC…LPELISKVVR (122 aa). Cys12, Cys48, Cys87, Cys162, Cys166, and Cys169 together coordinate [4Fe-4S] cluster. The 233-residue stretch at 148–380 folds into the Radical SAM core domain; it reads YPQGASSFIS…QQELTAQQLA (233 aa). A TRAM domain is found at 383–445; it reads ESCVGSIMKV…ASNSLTGEVI (63 aa).

This sequence belongs to the methylthiotransferase family. MiaB subfamily. Monomer. Requires [4Fe-4S] cluster as cofactor.

The protein localises to the cytoplasm. It catalyses the reaction N(6)-dimethylallyladenosine(37) in tRNA + (sulfur carrier)-SH + AH2 + 2 S-adenosyl-L-methionine = 2-methylsulfanyl-N(6)-dimethylallyladenosine(37) in tRNA + (sulfur carrier)-H + 5'-deoxyadenosine + L-methionine + A + S-adenosyl-L-homocysteine + 2 H(+). Catalyzes the methylthiolation of N6-(dimethylallyl)adenosine (i(6)A), leading to the formation of 2-methylthio-N6-(dimethylallyl)adenosine (ms(2)i(6)A) at position 37 in tRNAs that read codons beginning with uridine. The polypeptide is tRNA-2-methylthio-N(6)-dimethylallyladenosine synthase (Rickettsia felis (strain ATCC VR-1525 / URRWXCal2) (Rickettsia azadi)).